Here is a 252-residue protein sequence, read N- to C-terminus: 3-dehydroquinate dehydratase (252 aa).

Residues 46-48 and Arg-82 contribute to the 3-dehydroquinate site; that span reads EWR. The Proton donor/acceptor role is filled by His-143. The Schiff-base intermediate with substrate role is filled by Lys-170. Residues Arg-212, Ser-231, and Gln-235 each contribute to the 3-dehydroquinate site.

It belongs to the type-I 3-dehydroquinase family. In terms of assembly, homodimer.

It catalyses the reaction 3-dehydroquinate = 3-dehydroshikimate + H2O. It participates in metabolic intermediate biosynthesis; chorismate biosynthesis; chorismate from D-erythrose 4-phosphate and phosphoenolpyruvate: step 3/7. Its function is as follows. Involved in the third step of the chorismate pathway, which leads to the biosynthesis of aromatic amino acids. Catalyzes the cis-dehydration of 3-dehydroquinate (DHQ) and introduces the first double bond of the aromatic ring to yield 3-dehydroshikimate. This Listeria monocytogenes serotype 4b (strain CLIP80459) protein is 3-dehydroquinate dehydratase.